We begin with the raw amino-acid sequence, 197 residues long: 3-isopropylmalate dehydratase small subunit (197 aa).

It belongs to the LeuD family. LeuD type 1 subfamily. Heterodimer of LeuC and LeuD.

The enzyme catalyses (2R,3S)-3-isopropylmalate = (2S)-2-isopropylmalate. It participates in amino-acid biosynthesis; L-leucine biosynthesis; L-leucine from 3-methyl-2-oxobutanoate: step 2/4. In terms of biological role, catalyzes the isomerization between 2-isopropylmalate and 3-isopropylmalate, via the formation of 2-isopropylmaleate. This chain is 3-isopropylmalate dehydratase small subunit, found in Mycolicibacterium vanbaalenii (strain DSM 7251 / JCM 13017 / BCRC 16820 / KCTC 9966 / NRRL B-24157 / PYR-1) (Mycobacterium vanbaalenii).